We begin with the raw amino-acid sequence, 364 residues long: Spermidine/putrescine import ATP-binding protein PotA (364 aa).

The region spanning 6-236 (IEIRQIYKSY…PANLHVAMFI (231 aa)) is the ABC transporter domain. Position 38 to 45 (38 to 45 (GPSGCGKT)) interacts with ATP.

This sequence belongs to the ABC transporter superfamily. Spermidine/putrescine importer (TC 3.A.1.11.1) family. As to quaternary structure, the complex is composed of two ATP-binding proteins (PotA), two transmembrane proteins (PotB and PotC) and a solute-binding protein (PotD).

The protein localises to the cell inner membrane. The catalysed reaction is ATP + H2O + polyamine-[polyamine-binding protein]Side 1 = ADP + phosphate + polyamineSide 2 + [polyamine-binding protein]Side 1.. Its function is as follows. Part of the ABC transporter complex PotABCD involved in spermidine/putrescine import. Responsible for energy coupling to the transport system. This Legionella pneumophila (strain Paris) protein is Spermidine/putrescine import ATP-binding protein PotA.